Consider the following 362-residue polypeptide: Phospho-N-acetylmuramoyl-pentapeptide-transferase (362 aa).

10 consecutive transmembrane segments (helical) span residues 28–48 (GAVL…IAWL), 75–95 (TMGG…WADL), 100–120 (VWIV…DDYL), 134–154 (AKLV…WSLQ), 170–190 (VLLQ…VGAG), 201–221 (GLAI…SYLV), 241–261 (LAVF…FNAP), 265–285 (VFMG…ISVV), 290–310 (LVLG…IVQV), and 339–359 (TVVI…LATL).

This sequence belongs to the glycosyltransferase 4 family. MraY subfamily. It depends on Mg(2+) as a cofactor.

The protein localises to the cell inner membrane. It carries out the reaction UDP-N-acetyl-alpha-D-muramoyl-L-alanyl-gamma-D-glutamyl-meso-2,6-diaminopimeloyl-D-alanyl-D-alanine + di-trans,octa-cis-undecaprenyl phosphate = di-trans,octa-cis-undecaprenyl diphospho-N-acetyl-alpha-D-muramoyl-L-alanyl-D-glutamyl-meso-2,6-diaminopimeloyl-D-alanyl-D-alanine + UMP. The protein operates within cell wall biogenesis; peptidoglycan biosynthesis. Functionally, catalyzes the initial step of the lipid cycle reactions in the biosynthesis of the cell wall peptidoglycan: transfers peptidoglycan precursor phospho-MurNAc-pentapeptide from UDP-MurNAc-pentapeptide onto the lipid carrier undecaprenyl phosphate, yielding undecaprenyl-pyrophosphoryl-MurNAc-pentapeptide, known as lipid I. The protein is Phospho-N-acetylmuramoyl-pentapeptide-transferase of Paramagnetospirillum magneticum (strain ATCC 700264 / AMB-1) (Magnetospirillum magneticum).